We begin with the raw amino-acid sequence, 69 residues long: Ribosome modulation factor (69 aa).

It belongs to the ribosome modulation factor family.

The protein localises to the cytoplasm. Its function is as follows. During stationary phase, converts 70S ribosomes to an inactive dimeric form (100S ribosomes). The polypeptide is Ribosome modulation factor (Marinomonas mediterranea (strain ATCC 700492 / JCM 21426 / NBRC 103028 / MMB-1)).